A 2804-amino-acid chain; its full sequence is Nipped-B-like protein (2804 aa).

Polar residues-rich tracts occupy residues 128–173 (LSQN…QNSP) and 191–208 (HPSS…SVSS). Residues 128-340 (LSQNSMHSSP…LGKDEKEQSE (213 aa)) form a disordered region. Phosphoserine is present on residues Ser-150 and Ser-162. A compositionally biased stretch (basic and acidic residues) spans 234–249 (HHADNPRHGSSEDYLH). Ser-243, Ser-256, Ser-274, Ser-280, Ser-284, Ser-301, Ser-306, and Ser-318 each carry phosphoserine. The span at 331–340 (LGKDEKEQSE) shows a compositional bias: basic and acidic residues. Ser-350 is modified (phosphoserine). Positions 482–500 (RESAIERERFSKEVQDKDK) are enriched in basic and acidic residues. Positions 482 to 946 (RESAIERERF…NKAEFPSYLL (465 aa)) are disordered. Positions 523-534 (PASQETGSTGNG) are enriched in polar residues. 4 stretches are compositionally biased toward basic and acidic residues: residues 562 to 572 (DSIKKPEEIKQ), 593 to 663 (PENH…ECKQ), 672 to 685 (KQNE…KPND), and 694 to 939 (ETTK…DNKA). Thr-713 and Thr-746 each carry phosphothreonine. Residue Ser-912 is modified to Phosphoserine. The PxVxL motif signature appears at 996–1009 (NKGAKPVVVLQKLS). Disordered stretches follow at residues 1017–1047 (IKDR…DQSV) and 1060–1191 (ESTM…LTPE). N6-acetyllysine is present on Lys-1082. 3 positions are modified to phosphoserine: Ser-1089, Ser-1090, and Ser-1096. The segment covering 1089-1100 (SSDEDNDSDEAF) has biased composition (acidic residues). Basic and acidic residues predominate over residues 1109 to 1139 (KDDDKAWEYEERDRRSSGDHRRSGHSHEGRR). Ser-1150, Ser-1152, and Ser-1154 each carry phosphoserine. Phosphotyrosine is present on Tyr-1159. Phosphoserine is present on Ser-1160. Positions 1171–1182 (KMKKKEKQKKRK) are enriched in basic residues. Thr-1189 bears the Phosphothreonine mark. At Ser-1197 the chain carries Phosphoserine. Positions 1691 to 1710 (AMKSQKDEESSEGTHHAKEI) are disordered. HEAT repeat units follow at residues 1767-1805 (AQSF…VDPS), 1843-1881 (PQLA…EQPT), 1945-1984 (YDWF…HILK), 2227-2267 (VNLK…LKEM), and 2313-2351 (LIHP…KYAG). The segment covering 2473-2489 (VKDKRKERKSSPSKENE) has biased composition (basic and acidic residues). 2 disordered regions span residues 2473 to 2520 (VKDK…DDIN) and 2651 to 2696 (TSLL…DSTE). Ser-2493, Ser-2509, Ser-2511, Ser-2513, Ser-2515, Ser-2652, and Ser-2658 each carry phosphoserine. The span at 2510–2519 (DSDSDSEDDI) shows a compositional bias: acidic residues. Thr-2667 is modified (phosphothreonine). Ser-2672 carries the phosphoserine modification.

Belongs to the SCC2/Nipped-B family. In terms of assembly, heterodimerizes with MAU2/SCC4 to form the cohesin loading complex. The NIPBL-MAU2 heterodimer interacts with the cohesin complex composed of SMC1A/B and SMC3 heterodimer, RAD21 and STAG1/SA1. NIPBL directly contacts all members of the complex, RAD21, SMC1A/B, SMC3 and STAG1. Interacts directly (via PxVxL motif) with CBX5. Interacts with ZNF609 (via N-terminus). Interacts with the multiprotein complex Integrator. Interacts (via PxVxL motif) with CBX3. Interacts with BRD4. Widely expressed. Highly expressed in heart, skeletal muscle, fetal and adult liver, fetal and adult kidney. Expressed at intermediates level in thymus, placenta, peripheral leukocyte and small intestine. Weakly or not expressed in brain, colon, spleen and lung.

The protein resides in the nucleus. It is found in the chromosome. Its function is as follows. Plays an important role in the loading of the cohesin complex on to DNA. Forms a heterodimeric complex (also known as cohesin loading complex) with MAU2/SCC4 which mediates the loading of the cohesin complex onto chromatin. Plays a role in cohesin loading at sites of DNA damage. Its recruitment to double-strand breaks (DSBs) sites occurs in a CBX3-, RNF8- and RNF168-dependent manner whereas its recruitment to UV irradiation-induced DNA damage sites occurs in a ATM-, ATR-, RNF8- and RNF168-dependent manner. Along with ZNF609, promotes cortical neuron migration during brain development by regulating the transcription of crucial genes in this process. Preferentially binds promoters containing paused RNA polymerase II. Up-regulates the expression of SEMA3A, NRP1, PLXND1 and GABBR2 genes, among others. The polypeptide is Nipped-B-like protein (NIPBL) (Homo sapiens (Human)).